We begin with the raw amino-acid sequence, 879 residues long: Phosphoenolpyruvate carboxylase (879 aa).

Catalysis depends on residues histidine 138 and lysine 545.

It belongs to the PEPCase type 1 family. Mg(2+) serves as cofactor.

It carries out the reaction oxaloacetate + phosphate = phosphoenolpyruvate + hydrogencarbonate. Functionally, forms oxaloacetate, a four-carbon dicarboxylic acid source for the tricarboxylic acid cycle. The chain is Phosphoenolpyruvate carboxylase (ppc) from Haemophilus influenzae (strain ATCC 51907 / DSM 11121 / KW20 / Rd).